We begin with the raw amino-acid sequence, 210 residues long: LexA repressor (210 aa).

A DNA-binding region (H-T-H motif) is located at residues 31–51 (RVEISKELGFRSPNAAEEHLK). Residues S126 and K163 each act as for autocatalytic cleavage activity in the active site.

It belongs to the peptidase S24 family. In terms of assembly, homodimer.

The enzyme catalyses Hydrolysis of Ala-|-Gly bond in repressor LexA.. Functionally, represses a number of genes involved in the response to DNA damage (SOS response), including recA and lexA. In the presence of single-stranded DNA, RecA interacts with LexA causing an autocatalytic cleavage which disrupts the DNA-binding part of LexA, leading to derepression of the SOS regulon and eventually DNA repair. The polypeptide is LexA repressor (Histophilus somni (strain 129Pt) (Haemophilus somnus)).